A 69-amino-acid chain; its full sequence is Small, acid-soluble spore protein I (69 aa).

The protein belongs to the SspI family.

The protein localises to the spore core. The sequence is that of Small, acid-soluble spore protein I from Bacillus cereus (strain G9842).